Consider the following 89-residue polypeptide: Phosphocarrier protein HPr (89 aa).

The HPr domain maps to 1–88; the sequence is MLEHELTVTN…ELFENRFNED (88 aa). Histidine 15 functions as the Pros-phosphohistidine intermediate in the catalytic mechanism. Serine 46 carries the post-translational modification Phosphoserine; by HPrK/P.

It belongs to the HPr family.

The protein resides in the cytoplasm. With respect to regulation, phosphorylation on Ser-46 inhibits the phosphoryl transfer from enzyme I to HPr. General (non sugar-specific) component of the phosphoenolpyruvate-dependent sugar phosphotransferase system (sugar PTS). This major carbohydrate active-transport system catalyzes the phosphorylation of incoming sugar substrates concomitantly with their translocation across the cell membrane. The phosphoryl group from phosphoenolpyruvate (PEP) is transferred to the phosphoryl carrier protein HPr by enzyme I. Phospho-HPr then transfers it to the PTS EIIA domain. This is Phosphocarrier protein HPr (ptsH) from Xylella fastidiosa (strain Temecula1 / ATCC 700964).